We begin with the raw amino-acid sequence, 107 residues long: Urease subunit beta (107 aa).

The protein belongs to the urease beta subunit family. Heterotrimer of UreA (gamma), UreB (beta) and UreC (alpha) subunits. Three heterotrimers associate to form the active enzyme.

The protein resides in the cytoplasm. It carries out the reaction urea + 2 H2O + H(+) = hydrogencarbonate + 2 NH4(+). It participates in nitrogen metabolism; urea degradation; CO(2) and NH(3) from urea (urease route): step 1/1. In Teredinibacter turnerae (strain ATCC 39867 / T7901), this protein is Urease subunit beta.